The primary structure comprises 442 residues: SPRY domain-containing protein 3 (442 aa).

Residues 17 to 204 (DLNLHYRFLN…VRLHLNAELG (188 aa)) enclose the B30.2/SPRY domain. Residues 371-394 (EGEEEEEEEEEEEDGEEIEPEHEG) form a disordered region. The segment covering 372 to 390 (GEEEEEEEEEEEDGEEIEP) has biased composition (acidic residues).

This Homo sapiens (Human) protein is SPRY domain-containing protein 3 (SPRYD3).